We begin with the raw amino-acid sequence, 1556 residues long: Disco-interacting protein 2 homolog C (1556 aa).

Residues 7–120 form the DMAP1-binding domain; the sequence is EGMALPLEVR…PMPSKRRSLV (114 aa). Disordered stretches follow at residues 47–157 and 170–189; these read YLPQ…SQGS and GSTT…SGAA. Positions 81-93 are enriched in basic and acidic residues; sequence GSRDERYRSDVHT. Polar residues-rich tracts occupy residues 120–136 and 144–157; these read VVQT…TSSG and QGDS…SQGS. Positions 170–183 are enriched in low complexity; it reads GSTTSTTSSSSTQS. A Phosphothreonine modification is found at Thr264.

The protein belongs to the DIP2 family.

The chain is Disco-interacting protein 2 homolog C (DIP2C) from Homo sapiens (Human).